A 154-amino-acid polypeptide reads, in one-letter code: Terephthalate 1,2-dioxygenase, terminal oxygenase component subunit beta 1 (154 aa).

It belongs to the bacterial ring-hydroxylating dioxygenase beta subunit family. In terms of assembly, heterotetramer composed of 2 alpha (TphA2I and TphA2II) and 2 beta (TphA3I and TphA3II) subunits. Part of a multicomponent enzyme system composed of a reductase (TphA1I or TphA1II) and a two-subunit oxygenase component (TphA2I or TphA2II and TphA3I or TphA3II). It depends on Fe cation as a cofactor.

It carries out the reaction terephthalate + NADH + O2 + H(+) = (3S,4R)-3,4-dihydroxycyclohexa-1,5-diene-1,4-dicarboxylate + NAD(+). With respect to regulation, inhibited by EDTA. Component of the terephthalate 1,2-dioxygenase multicomponent enzyme system which catalyzes the dioxygenation of terephthalate (TER/TPA) to 1,2-dihydroxy-3,5-cyclohexadiene-1,4-dicarboxylic acid (DCD). It can also use 2,5-dicarboxypyridine (PDC) and 1,4-napthalenedicarboxylic acid (NDC) as substrates, and preferentially uses NADPH which is the physiological electron donor. The chain is Terephthalate 1,2-dioxygenase, terminal oxygenase component subunit beta 1 (tphA3I) from Comamonas sp.